Here is a 60-residue protein sequence, read N- to C-terminus: Putative insect toxin Acra6 (60 aa).

One can recognise an LCN-type CS-alpha/beta domain in the interval 2 to 60 (RDGYIRRKDEFKFKCYVDGKDCDDVCKSEGGSAGYCTALGFLCYCAGLPDDKAWKPTSS). Disulfide bonds link C16–C37, C23–C44, and C27–C46.

Belongs to the long (4 C-C) scorpion toxin superfamily. Sodium channel inhibitor family. Beta subfamily. In terms of tissue distribution, expressed by the venom gland.

Its subcellular location is the secreted. Depressant insect toxins cause a transient contraction paralysis followed by a slow flaccid paralysis. They bind voltage-independently to sodium channels (Nav) and block action potentials, primarily by depolarizing the axonal membrane and suppressing the sodium current. In Androctonus crassicauda (Arabian fat-tailed scorpion), this protein is Putative insect toxin Acra6.